The chain runs to 189 residues: Transcriptional repressor NrdR (189 aa).

A zinc finger spans residues 3–34; that stretch reads CPFCRGDDSRVVDSREVEDGQAIRRRRSCSGC. In terms of domain architecture, ATP-cone spans 46-136; sequence LSVVKRSGVT…VYRAFSSVED (91 aa). The disordered stretch occupies residues 152–189; the sequence is RLPEGPEAAQGGPESKAGNGQAAGSGDPEGVKAEKSSE. The span at 180 to 189 shows a compositional bias: basic and acidic residues; it reads EGVKAEKSSE.

This sequence belongs to the NrdR family. Zn(2+) serves as cofactor.

Negatively regulates transcription of bacterial ribonucleotide reductase nrd genes and operons by binding to NrdR-boxes. In Saccharopolyspora erythraea (strain ATCC 11635 / DSM 40517 / JCM 4748 / NBRC 13426 / NCIMB 8594 / NRRL 2338), this protein is Transcriptional repressor NrdR.